The primary structure comprises 274 residues: Large ribosomal subunit protein uL2 (274 aa).

The disordered stretch occupies residues 223–274 (VAMNPVDHPHGGGEGRTSGGRHPVTPWGVPTKGYKTRSNKRTDKYIVRRRNK).

This sequence belongs to the universal ribosomal protein uL2 family. In terms of assembly, part of the 50S ribosomal subunit. Forms a bridge to the 30S subunit in the 70S ribosome.

Its function is as follows. One of the primary rRNA binding proteins. Required for association of the 30S and 50S subunits to form the 70S ribosome, for tRNA binding and peptide bond formation. It has been suggested to have peptidyltransferase activity; this is somewhat controversial. Makes several contacts with the 16S rRNA in the 70S ribosome. The sequence is that of Large ribosomal subunit protein uL2 from Shewanella baltica (strain OS223).